Here is a 408-residue protein sequence, read N- to C-terminus: Histidine--tRNA ligase (408 aa).

It belongs to the class-II aminoacyl-tRNA synthetase family. As to quaternary structure, homodimer.

Its subcellular location is the cytoplasm. The enzyme catalyses tRNA(His) + L-histidine + ATP = L-histidyl-tRNA(His) + AMP + diphosphate + H(+). The sequence is that of Histidine--tRNA ligase from Campylobacter concisus (strain 13826).